Consider the following 453-residue polypeptide: Phosphoglucosamine mutase (453 aa).

The active-site Phosphoserine intermediate is Ser110. Ser110, Asp248, Asp250, and Asp252 together coordinate Mg(2+). Residue Ser110 is modified to Phosphoserine.

This sequence belongs to the phosphohexose mutase family. The cofactor is Mg(2+). Post-translationally, activated by phosphorylation.

It carries out the reaction alpha-D-glucosamine 1-phosphate = D-glucosamine 6-phosphate. In terms of biological role, catalyzes the conversion of glucosamine-6-phosphate to glucosamine-1-phosphate. The chain is Phosphoglucosamine mutase from Mycolicibacterium smegmatis (strain ATCC 700084 / mc(2)155) (Mycobacterium smegmatis).